The following is a 433-amino-acid chain: 23S rRNA (uracil(1939)-C(5))-methyltransferase RlmD (433 aa).

Residues 1–53 enclose the TRAM domain; it reads MPTAVIESLDHEGRGIARVEGKAVFIEGGLPGETVEYRVLRSKPNYEQAEATR. Cys66, Cys72, Cys75, and Cys154 together coordinate [4Fe-4S] cluster. S-adenosyl-L-methionine is bound by residues Gln263, Phe292, Asn297, Glu313, Asn341, and Asp362. Cys389 acts as the Nucleophile in catalysis.

Belongs to the class I-like SAM-binding methyltransferase superfamily. RNA M5U methyltransferase family. RlmD subfamily.

The enzyme catalyses uridine(1939) in 23S rRNA + S-adenosyl-L-methionine = 5-methyluridine(1939) in 23S rRNA + S-adenosyl-L-homocysteine + H(+). In terms of biological role, catalyzes the formation of 5-methyl-uridine at position 1939 (m5U1939) in 23S rRNA. The protein is 23S rRNA (uracil(1939)-C(5))-methyltransferase RlmD of Azoarcus sp. (strain BH72).